Here is a 172-residue protein sequence, read N- to C-terminus: Adenine phosphoribosyltransferase (172 aa).

Belongs to the purine/pyrimidine phosphoribosyltransferase family. In terms of assembly, homodimer.

The protein resides in the cytoplasm. The enzyme catalyses AMP + diphosphate = 5-phospho-alpha-D-ribose 1-diphosphate + adenine. It functions in the pathway purine metabolism; AMP biosynthesis via salvage pathway; AMP from adenine: step 1/1. Its function is as follows. Catalyzes a salvage reaction resulting in the formation of AMP, that is energically less costly than de novo synthesis. The protein is Adenine phosphoribosyltransferase of Clostridium beijerinckii (strain ATCC 51743 / NCIMB 8052) (Clostridium acetobutylicum).